The primary structure comprises 229 residues: Endonuclease V (229 aa).

Residues D36 and D104 each contribute to the Mg(2+) site.

Belongs to the endonuclease V family. Mg(2+) serves as cofactor.

Its subcellular location is the cytoplasm. The enzyme catalyses Endonucleolytic cleavage at apurinic or apyrimidinic sites to products with a 5'-phosphate.. Its function is as follows. DNA repair enzyme involved in the repair of deaminated bases. Selectively cleaves double-stranded DNA at the second phosphodiester bond 3' to a deoxyinosine leaving behind the intact lesion on the nicked DNA. The sequence is that of Endonuclease V from Pectobacterium carotovorum subsp. carotovorum (strain PC1).